A 311-amino-acid polypeptide reads, in one-letter code: GTP cyclohydrolase MptA (311 aa).

Belongs to the GTP cyclohydrolase IV family. In terms of assembly, homodimer. It depends on Fe(2+) as a cofactor.

It carries out the reaction GTP + H2O = 7,8-dihydroneopterin 2',3'-cyclic phosphate + formate + diphosphate + H(+). It functions in the pathway cofactor biosynthesis; 5,6,7,8-tetrahydromethanopterin biosynthesis. Converts GTP to 7,8-dihydro-D-neopterin 2',3'-cyclic phosphate, the first intermediate in the biosynthesis of coenzyme methanopterin. The sequence is that of GTP cyclohydrolase MptA from Methanocorpusculum labreanum (strain ATCC 43576 / DSM 4855 / Z).